A 93-amino-acid chain; its full sequence is Acylphosphatase (93 aa).

The Acylphosphatase-like domain maps to 5-93 (TAILRVTGFV…EDRKTFDIVY (89 aa)). Residues Arg20 and Asn38 contribute to the active site.

It belongs to the acylphosphatase family.

It catalyses the reaction an acyl phosphate + H2O = a carboxylate + phosphate + H(+). The polypeptide is Acylphosphatase (acyP) (Listeria welshimeri serovar 6b (strain ATCC 35897 / DSM 20650 / CCUG 15529 / CIP 8149 / NCTC 11857 / SLCC 5334 / V8)).